A 65-amino-acid chain; its full sequence is MPKIKTHSSSKKRFKLTGTGKVKRAKAYKSHILTKKTSKRKRNLRKSTIASSANASVIKKLIPYK.

Belongs to the bacterial ribosomal protein bL35 family.

This is Large ribosomal subunit protein bL35 from Acetivibrio thermocellus (strain ATCC 27405 / DSM 1237 / JCM 9322 / NBRC 103400 / NCIMB 10682 / NRRL B-4536 / VPI 7372) (Clostridium thermocellum).